The sequence spans 282 residues: Bacterial lipoprotein FTN_1103 (282 aa).

A signal peptide spans 1–28 (MKYGNLMMTKKKLLIGMVTISGIVILGS). Residue Cys29 is the site of N-palmitoyl cysteine attachment. Residue Cys29 is the site of S-diacylglycerol cysteine attachment.

The protein resides in the cell membrane. In terms of biological role, stimulates the host immune inflammatory signaling system allowing the host to combat the bacteria. Stimulates mouse interleukin-6 (Il6) production. The polypeptide is Bacterial lipoprotein FTN_1103 (Francisella tularensis subsp. novicida (strain U112)).